The primary structure comprises 216 residues: Elongation factor Ts (216 aa).

The tract at residues 81–84 (TDFV) is involved in Mg(2+) ion dislocation from EF-Tu.

Belongs to the EF-Ts family.

Its subcellular location is the cytoplasm. Associates with the EF-Tu.GDP complex and induces the exchange of GDP to GTP. It remains bound to the aminoacyl-tRNA.EF-Tu.GTP complex up to the GTP hydrolysis stage on the ribosome. This chain is Elongation factor Ts, found in Geobacter sulfurreducens (strain ATCC 51573 / DSM 12127 / PCA).